A 186-amino-acid chain; its full sequence is uncharacterized protein (186 aa).

This is an uncharacterized protein from Caenorhabditis elegans.